Consider the following 519-residue polypeptide: Maturase K (519 aa).

It belongs to the intron maturase 2 family. MatK subfamily.

The protein resides in the plastid. It localises to the chloroplast. Functionally, usually encoded in the trnK tRNA gene intron. Probably assists in splicing its own and other chloroplast group II introns. The protein is Maturase K of Aesculus pavia (Red buckeye).